A 944-amino-acid polypeptide reads, in one-letter code: Isoleucine--tRNA ligase (944 aa).

A 'HIGH' region motif is present at residues 58-68 (PYANGQIHIGH). Glu568 serves as a coordination point for L-isoleucyl-5'-AMP. The short motif at 609–613 (KMSKS) is the 'KMSKS' region element. Lys612 contacts ATP. 4 residues coordinate Zn(2+): Cys907, Cys910, Cys927, and Cys930.

Belongs to the class-I aminoacyl-tRNA synthetase family. IleS type 1 subfamily. In terms of assembly, monomer. The cofactor is Zn(2+).

The protein localises to the cytoplasm. The catalysed reaction is tRNA(Ile) + L-isoleucine + ATP = L-isoleucyl-tRNA(Ile) + AMP + diphosphate. Catalyzes the attachment of isoleucine to tRNA(Ile). As IleRS can inadvertently accommodate and process structurally similar amino acids such as valine, to avoid such errors it has two additional distinct tRNA(Ile)-dependent editing activities. One activity is designated as 'pretransfer' editing and involves the hydrolysis of activated Val-AMP. The other activity is designated 'posttransfer' editing and involves deacylation of mischarged Val-tRNA(Ile). This chain is Isoleucine--tRNA ligase, found in Idiomarina loihiensis (strain ATCC BAA-735 / DSM 15497 / L2-TR).